Consider the following 882-residue polypeptide: Homeobox-leucine zipper protein ROC3 (882 aa).

The disordered stretch occupies residues 104 to 144 (DVDDDHKPQHSGHDQPPDAAQPSGAAGGNAKKKRYHRHTAH). Positions 107–119 (DDHKPQHSGHDQP) are enriched in basic and acidic residues. Basic residues predominate over residues 133-143 (AKKKRYHRHTA). Positions 134 to 193 (KKKRYHRHTAHQIQQMEALFKECPHPDDKQRLKLSQELGLKPRQVKFWFQNRRTQMKAQQ) form a DNA-binding region, homeobox. Residues 200–263 (ILRAENENLK…LDRLACIATR (64 aa)) adopt a coiled-coil conformation. The region spanning 340–584 (QEQDKQLVVD…LQRQCERLAS (245 aa)) is the START domain. Residues 782–816 (AAAPTISSSTTTTTGNGNGETSSTPPRNSSSNNNN) show a composition bias toward low complexity. Residues 782–820 (AAAPTISSSTTTTTGNGNGETSSTPPRNSSSNNNNADEL) form a disordered region.

This sequence belongs to the HD-ZIP homeobox family. Class IV subfamily.

It localises to the nucleus. Probable transcription factor. This Oryza sativa subsp. japonica (Rice) protein is Homeobox-leucine zipper protein ROC3 (ROC3).